A 351-amino-acid chain; its full sequence is Deoxyuridylate hydroxymethyltransferase (351 aa).

This sequence belongs to the thymidylate synthase family.

The catalysed reaction is dUMP + (6R)-5,10-methylene-5,6,7,8-tetrahydrofolate + H2O = 5-hydroxymethyl-dUMP + (6S)-5,6,7,8-tetrahydrofolate. Functionally, catalyzes formation of 5-hydroxymethyldeoxyuridylate (5HMdUMP) as a step in the pathway that replaces dTMP by thymidine hypermodifications in the viral genome. As a final result of the pathway of hypermodification, 5-aminoethyl-2'-deoxyuridine (5-NedU) substitutes for about 30% of thymidines in the viral DNA. These modifications probably prevent degradation of viral genome by the host restriction-modification antiviral defense system. The protein is Deoxyuridylate hydroxymethyltransferase of Pseudomonas aeruginosa.